Here is a 214-residue protein sequence, read N- to C-terminus: MRPDGPRDPVVGPDSGPEPPYPVRLSGPVIKGFGRGSKELGIPTANIPAEELAEHPDLQVGVYYGVVALDPAKFQYHGDASRKGEDSQAAILPAVLSIGYNPFYKNKTRSIEIHIMPPLSSPSPTAEVTTQGQGHGQVKFHKLPDFYGTQLKLLILGYIRPEFDYVSLEALVEDIRVDCEVARASLQRPAYERYLAGGQGLDAVEKQRRWLVSF.

Positions 1 to 26 (MRPDGPRDPVVGPDSGPEPPYPVRLS) are disordered. The Mg(2+) site is built by T44 and N46. The active-site Nucleophile is the E112.

It belongs to the flavokinase family. Zn(2+) is required as a cofactor. The cofactor is Mg(2+).

The enzyme catalyses riboflavin + ATP = FMN + ADP + H(+). It functions in the pathway cofactor biosynthesis; FMN biosynthesis; FMN from riboflavin (ATP route): step 1/1. In terms of biological role, catalyzes the phosphorylation of riboflavin (vitamin B2) to form flavin mononucleotide (FMN) coenzyme. The protein is Riboflavin kinase (fmn1) of Aspergillus clavatus (strain ATCC 1007 / CBS 513.65 / DSM 816 / NCTC 3887 / NRRL 1 / QM 1276 / 107).